The primary structure comprises 836 residues: TATA box-binding protein-associated factor RNA polymerase I subunit C (836 aa).

2 disordered regions span residues 662–683 and 703–836; these read GDLS…QQDE and HRGE…RMGF. Over residues 738–754 the composition is skewed to polar residues; that stretch reads DASSAPRSQDLSTSEAR. The span at 780-796 shows a compositional bias: basic and acidic residues; it reads RQTLRDHTDKLPLKRDT. Position 802 is a phosphothreonine (Thr802). The span at 803-828 shows a compositional bias: polar residues; that stretch reads PPSQASSLQTMSFRQQTPVHSGSQPP.

As to quaternary structure, component of the transcription factor SL1/TIF-IB complex, composed of TBP and at least TAF1A, TAF1B, TAF1C and TAF1D. In the complex interacts directly with TBP, TAF1A and TAF1B. Interaction of the SL1/TIF-IB subunits with TBP excludes interaction of TBP with the transcription factor IID (TFIID) subunits. Interacts with MYC and RRN3. Interacts with p53/TP53; the interaction prevents the association of SL1/TIF-IB with UBTF and represses RNA polymerase I transcription. Part of Pol I pre-initiation complex (PIC), in which Pol I core assembles with RRN3 and promoter-bound UTBF and SL1/TIF-IB complex.

Its subcellular location is the nucleus. It is found in the nucleolus. In terms of biological role, component of the transcription factor SL1/TIF-IB complex, which is involved in the assembly of the PIC (pre-initiation complex) during RNA polymerase I-dependent transcription. The rate of PIC formation probably is primarily dependent on the rate of association of SL1/TIF-IB with the rDNA promoter. SL1/TIF-IB is involved in stabilization of nucleolar transcription factor 1/UBTF on rDNA. Formation of SL1/TIF-IB excludes the association of TBP with TFIID subunits. Recruits RNA polymerase I to the rRNA gene promoter via interaction with RRN3. The sequence is that of TATA box-binding protein-associated factor RNA polymerase I subunit C (Taf1c) from Mus musculus (Mouse).